The following is a 220-amino-acid chain: Putative glutathione S-transferase C1183.02 (220 aa).

Residues F2–D81 form the GST N-terminal domain. A GST C-terminal domain is found at N89–T216.

The protein belongs to the GST superfamily.

Its subcellular location is the cytoplasm. It catalyses the reaction RX + glutathione = an S-substituted glutathione + a halide anion + H(+). Involved in the oxidative stress response and detoxification. The chain is Putative glutathione S-transferase C1183.02 from Schizosaccharomyces pombe (strain 972 / ATCC 24843) (Fission yeast).